The primary structure comprises 573 residues: 60 kDa heat shock protein, mitochondrial (573 aa).

The N-terminal 26 residues, 1-26 (MLRLPTVLRQMRPVSRALAPHLTRAY), are a transit peptide targeting the mitochondrion. K31 bears the N6-succinyllysine mark. Phosphoserine occurs at positions 67 and 70. K75 contributes to the ATP binding site. K75 is modified (N6-acetyllysine). K82 carries the N6-acetyllysine; alternate modification. K82 carries the N6-succinyllysine; alternate modification. K87 bears the N6-acetyllysine mark. Y90 bears the Phosphotyrosine mark. N6-acetyllysine is present on K91. 111–115 (DGTTT) provides a ligand contact to ATP. K125 bears the N6-acetyllysine; alternate mark. N6-succinyllysine; alternate is present on K125. Residue K130 is modified to N6-acetyllysine. N6-acetyllysine; alternate is present on K133. Position 133 is an N6-succinyllysine; alternate (K133). N6-malonyllysine; alternate is present on K133. An N6-acetyllysine modification is found at K156. K191, K202, K205, K218, and K236 each carry N6-acetyllysine; alternate. 5 positions are modified to N6-succinyllysine; alternate: K191, K202, K205, K218, and K236. The residue at position 249 (K249) is an N6-acetyllysine. An N6-acetyllysine; alternate modification is found at K250. K250 is subject to N6-succinyllysine; alternate. N6-acetyllysine occurs at positions 269 and 292. Residue K301 is modified to N6-succinyllysine. K314 is subject to N6-acetyllysine. K352 carries the N6-acetyllysine; alternate modification. K352 carries the post-translational modification N6-succinyllysine; alternate. 2 positions are modified to N6-acetyllysine: K359 and K389. Residue K396 is modified to N6-acetyllysine; alternate. An N6-succinyllysine; alternate modification is found at K396. S410 is modified (phosphoserine). G440 provides a ligand contact to ATP. At K455 the chain carries N6-acetyllysine; alternate. K455 bears the N6-succinyllysine; alternate mark. K469 is subject to N6-acetyllysine. The residue at position 481 (K481) is an N6-acetyllysine; alternate. K481 carries the post-translational modification N6-succinyllysine; alternate. Position 488 is a phosphoserine (S488). Residue D520 participates in ATP binding. K551 is covalently cross-linked (Glycyl lysine isopeptide (Lys-Gly) (interchain with G-Cter in SUMO2)).

This sequence belongs to the chaperonin (HSP60) family. Homoheptamer arranged in a ring structure. The functional units of these chaperonins consist of heptameric rings of the large subunit Hsp60, which function as a back-to-back double ring. Interacts with 2 heptameric Hsp10 rings to form the symmetrical football complex. Interacts with HRAS. Interacts with ATAD3A. Interacts with ETFBKMT and EEF1AKMT3. Interacts with MFHAS1.

It is found in the mitochondrion matrix. The enzyme catalyses ATP + H2O + a folded polypeptide = ADP + phosphate + an unfolded polypeptide.. Its function is as follows. Chaperonin implicated in mitochondrial protein import and macromolecular assembly. Together with Hsp10, facilitates the correct folding of imported proteins. May also prevent misfolding and promote the refolding and proper assembly of unfolded polypeptides generated under stress conditions in the mitochondrial matrix. The functional units of these chaperonins consist of heptameric rings of the large subunit Hsp60, which function as a back-to-back double ring. In a cyclic reaction, Hsp60 ring complexes bind one unfolded substrate protein per ring, followed by the binding of ATP and association with 2 heptameric rings of the co-chaperonin Hsp10. This leads to sequestration of the substrate protein in the inner cavity of Hsp60 where, for a certain period of time, it can fold undisturbed by other cell components. Synchronous hydrolysis of ATP in all Hsp60 subunits results in the dissociation of the chaperonin rings and the release of ADP and the folded substrate protein. This chain is 60 kDa heat shock protein, mitochondrial (Hspd1), found in Rattus norvegicus (Rat).